Here is a 338-residue protein sequence, read N- to C-terminus: Methionine synthase (338 aa).

4 residues coordinate Zn(2+): His210, Cys212, Glu234, and Cys294.

The protein belongs to the archaeal MetE family. Requires Zn(2+) as cofactor.

It participates in amino-acid biosynthesis; L-methionine biosynthesis via de novo pathway. Catalyzes the transfer of a methyl group to L-homocysteine resulting in methionine formation. The physiological methyl donor is unknown. The chain is Methionine synthase from Pyrococcus abyssi (strain GE5 / Orsay).